Reading from the N-terminus, the 157-residue chain is Protein-export protein SecB (157 aa).

It belongs to the SecB family. Homotetramer, a dimer of dimers. One homotetramer interacts with 1 SecA dimer.

It is found in the cytoplasm. In terms of biological role, one of the proteins required for the normal export of preproteins out of the cell cytoplasm. It is a molecular chaperone that binds to a subset of precursor proteins, maintaining them in a translocation-competent state. It also specifically binds to its receptor SecA. This Methylobacillus flagellatus (strain ATCC 51484 / DSM 6875 / VKM B-1610 / KT) protein is Protein-export protein SecB.